Consider the following 65-residue polypeptide: Carboxypeptidase A inhibitor (65 aa).

This sequence belongs to the protease inhibitor I44 family.

The protein localises to the secreted. Its function is as follows. Inhibits carboxypeptidase A. This is Carboxypeptidase A inhibitor from Ascaris suum (Pig roundworm).